Reading from the N-terminus, the 116-residue chain is Protein Wnt-5(III) (116 aa).

A lipid anchor (O-palmitoleoyl serine; by PORCN) is attached at Ser-1. A glycan (N-linked (GlcNAc...) asparagine) is linked at Asn-69. A disulfide bridge connects residues Cys-82 and Cys-97.

It belongs to the Wnt family. Palmitoleoylation is required for efficient binding to frizzled receptors. Depalmitoleoylation leads to Wnt signaling pathway inhibition.

It is found in the secreted. It localises to the extracellular space. The protein localises to the extracellular matrix. Functionally, ligand for members of the frizzled family of seven transmembrane receptors. Probable developmental protein. May be a signaling molecule which affects the development of discrete regions of tissues. Is likely to signal over only few cell diameters. This chain is Protein Wnt-5(III) (WNT-5(III)), found in Eptatretus stoutii (Pacific hagfish).